The chain runs to 107 residues: Ig kappa chain V-VI region TEPC 601/TEPC 191 (107 aa).

The framework-1 stretch occupies residues 1 to 23 (EIVLTQSPAITAASLGQKVTITC). A disulfide bridge links cysteine 23 with cysteine 87. The complementarity-determining-1 stretch occupies residues 24–33 (SASSSVSYMH). Residues 34 to 48 (WYQQKSGTSPKPWIY) are framework-2. Residues 49 to 55 (EISKLAS) form a complementarity-determining-2 region. Residues 56–87 (GVPARFSGSGSGTSYSLTISSMEAEDAAIYYC) form a framework-3 region. Residues 88 to 96 (QQWNYPLIT) form a complementarity-determining-3 region. The segment at 97 to 106 (FGAGTKLELK) is framework-4.

The polypeptide is Ig kappa chain V-VI region TEPC 601/TEPC 191 (Mus musculus (Mouse)).